Reading from the N-terminus, the 345-residue chain is Calcium uniporter regulatory subunit MCUb, mitochondrial (345 aa).

A mitochondrion-targeting transit peptide spans Met1–Leu44. Residues Glu188–Arg221 are a coiled coil. Helical transmembrane passes span Leu229 to Trp249 and Pro259 to Thr279. Positions Phe306–Leu334 form a coiled coil.

It belongs to the MCU (TC 1.A.77) family. In terms of assembly, homooligomer. Associates with the uniplex complex, composed of MCU, MICU1, MICU2 and EMRE/SMDT1, inhibiting its activity. As to expression, detected in lung, brain and heart, and at lower levels in white fat, skeletal muscle and spleen. Detected at very low levels in kidney and liver. Highly expressed in macrophages during the progression of skeletal muscle regeneration.

Its subcellular location is the mitochondrion inner membrane. Negative regulator of the mitochondrial calcium uniporter (MCU), a channel that mediates calcium uptake into the mitochondrial matrix. MCUB is required to limit mitochondrial calcium overload during stress. Acts as a dominant-negative regulator that displaces MCU from the functional uniplex complex and thereby decreases the association of calcium sensors MICU1 and MICU2, preventing channel gating. Mitochondrial calcium homeostasis plays key roles in mitochondrial metabolism. Acts as an important regulator of mitochondrial metabolism in response to stress in muscle cells: induced in response to fasting, leading to restrict mitochondrial calcium uptake, resulting in reprogramming of mitochondria toward fatty acid oxidation preference. Acts as a regulator of macrophage polarization during skeletal muscle regeneration: inhibition of mitochondrial calcium uptake drives differentiation of macrophages with anti-inflammatory profile, promoting the differentiation and fusion of satellite cells. This is Calcium uniporter regulatory subunit MCUb, mitochondrial from Mus musculus (Mouse).